The following is a 148-amino-acid chain: Ribonuclease P protein component (148 aa).

Residues 119 to 148 (PLPAAPGTMPPARAPRPSSLSPTEPDPRSD) form a disordered region.

The protein belongs to the RnpA family. As to quaternary structure, consists of a catalytic RNA component (M1 or rnpB) and a protein subunit.

The enzyme catalyses Endonucleolytic cleavage of RNA, removing 5'-extranucleotides from tRNA precursor.. RNaseP catalyzes the removal of the 5'-leader sequence from pre-tRNA to produce the mature 5'-terminus. It can also cleave other RNA substrates such as 4.5S RNA. The protein component plays an auxiliary but essential role in vivo by binding to the 5'-leader sequence and broadening the substrate specificity of the ribozyme. The sequence is that of Ribonuclease P protein component from Xanthomonas campestris pv. campestris (strain 8004).